The following is a 364-amino-acid chain: Phosphate acyltransferase (364 aa).

A disordered region spans residues 343 to 364; sequence IRTSGRSGGKSKSSAAREDGAA.

The protein belongs to the PlsX family. In terms of assembly, homodimer. Probably interacts with PlsY.

The protein resides in the cytoplasm. It catalyses the reaction a fatty acyl-[ACP] + phosphate = an acyl phosphate + holo-[ACP]. It functions in the pathway lipid metabolism; phospholipid metabolism. In terms of biological role, catalyzes the reversible formation of acyl-phosphate (acyl-PO(4)) from acyl-[acyl-carrier-protein] (acyl-ACP). This enzyme utilizes acyl-ACP as fatty acyl donor, but not acyl-CoA. The polypeptide is Phosphate acyltransferase (Novosphingobium aromaticivorans (strain ATCC 700278 / DSM 12444 / CCUG 56034 / CIP 105152 / NBRC 16084 / F199)).